Reading from the N-terminus, the 379-residue chain is Alcohol dehydrogenase 2 (379 aa).

C48 lines the Zn(2+) pocket. 49 to 53 (HTDML) contacts NAD(+). The Zn(2+) site is built by H69, C100, C103, C106, C114, and C178. Residues 203–208 (GLGAVG), D227, K232, 275–277 (TGI), 298–300 (IGA), and 321–323 (TTF) contribute to the NAD(+) site.

This sequence belongs to the zinc-containing alcohol dehydrogenase family. Class-IV subfamily. In terms of assembly, homodimer. It depends on Zn(2+) as a cofactor. Expressed in flowers and disk florets.

It catalyses the reaction (R,R)-chrysanthemol + NAD(+) = (1R,3R)-chrysanthemal + NADH + H(+). The enzyme catalyses nerol + NAD(+) = neral + NADH + H(+). It carries out the reaction (S)-(-)-citronellol + NAD(+) = (S)-(-)-citronellal + NADH + H(+). The catalysed reaction is perillyl alcohol + NAD(+) = perillyl aldehyde + NADH + H(+). It catalyses the reaction (6E)-8-hydroxygeraniol + NAD(+) = (6E)-8-hydroxygeranial + NADH + H(+). The enzyme catalyses (2E)-geraniol + NAD(+) = (2E)-geranial + NADH + H(+). It participates in isoprenoid biosynthesis. Functionally, component of the monoterpenoid pyrethrins biosynthesis; pyrethrins are widely used plant-derived pesticide. Mediates the conversion of trans-chrysanthemol into trans-chrysanthemal. The protein is Alcohol dehydrogenase 2 of Tanacetum cinerariifolium (Dalmatian daisy).